The following is a 527-amino-acid chain: Zinc finger protein 35 (527 aa).

The interval 9-221 (MALAPWGPVK…NPKTQLGQKP (213 aa)) is globular domain. Residues 16–38 (PVKVKKEEEEEENFPGQASSQQV) are disordered. Glycyl lysine isopeptide (Lys-Gly) (interchain with G-Cter in SUMO2) cross-links involve residues K20, K21, K99, K117, K125, K144, K158, K189, and K214. 2 C2H2-type zinc fingers span residues 222–244 (FTCSVCGKGFSQSANLVVHQRIH) and 250–272 (FECHECGKAFIQSANLVVHQRIH). K276 is covalently cross-linked (Glycyl lysine isopeptide (Lys-Gly) (interchain with G-Cter in SUMO2)). 9 consecutive C2H2-type zinc fingers follow at residues 278–300 (YVCSKCGKAFTQSSNLTVHQKIH), 306–328 (FKCNECEKAFSYSSQLARHQKVH), 334–356 (YECNECGKTFTRSSNLIVHQRIH), 362–384 (FACNDCGKAFTQSANLIVHQRSH), 390–412 (YECKECGKAFSCFSHLIVHQRIH), 418–440 (YDCSECGKAFSQLSCLIVHQRIH), 446–468 (YVCNECGKAFTCSSYLLIHQRIH), 474–496 (YTCNECGKAFRQRSSLTVHQRTH), and 502–524 (YECEKCGAAFISNSHLMRHHRTH).

The protein belongs to the krueppel C2H2-type zinc-finger protein family.

The protein resides in the nucleus. Functionally, may be involved in transcriptional regulation. Involved in cell differentiation and/or proliferation. The protein is Zinc finger protein 35 (ZNF35) of Homo sapiens (Human).